The sequence spans 357 residues: Elongation factor Ts (357 aa).

An involved in Mg(2+) ion dislocation from EF-Tu region spans residues 82 to 85; it reads TDFV.

Belongs to the EF-Ts family.

It is found in the cytoplasm. Associates with the EF-Tu.GDP complex and induces the exchange of GDP to GTP. It remains bound to the aminoacyl-tRNA.EF-Tu.GTP complex up to the GTP hydrolysis stage on the ribosome. The protein is Elongation factor Ts of Campylobacter jejuni (strain RM1221).